Consider the following 263-residue polypeptide: MDYWFAEIVTIGNEVLSGKTVNTNASHIGRRLTSLGFTVRRITVVMDDIDEIVSAFREAIDRKPKVIVSSGGLGPTWDDKTAEGLAKALGVNLELNKTAFDMILEKYTKRNIPLTEERKKMAYLPYGAMAVENNEGIAPGIYIYHNNIDILATPGVPREMENVLENFINKMLRNKPNLKYLEDFIYVENVMESALAPYVKELVKKYDIYIKTHPKSYELLRPILEIQIAGSGREEEIKVKIEKVKNELLDAIKKLNGIIRNSL.

Belongs to the CinA family.

The polypeptide is Protein M1425_2021 (Saccharolobus islandicus (strain M.14.25 / Kamchatka #1) (Sulfolobus islandicus)).